The sequence spans 374 residues: Putative glutamate--cysteine ligase 2 (374 aa).

It belongs to the glutamate--cysteine ligase type 2 family. YbdK subfamily.

It carries out the reaction L-cysteine + L-glutamate + ATP = gamma-L-glutamyl-L-cysteine + ADP + phosphate + H(+). Its function is as follows. ATP-dependent carboxylate-amine ligase which exhibits weak glutamate--cysteine ligase activity. The chain is Putative glutamate--cysteine ligase 2 from Paracidovorax citrulli (strain AAC00-1) (Acidovorax citrulli).